The sequence spans 355 residues: Uroporphyrinogen decarboxylase (355 aa).

Substrate is bound by residues 38-42, D87, Y162, S217, and H331; that span reads RQAGR.

The protein belongs to the uroporphyrinogen decarboxylase family. In terms of assembly, homodimer.

It localises to the cytoplasm. The enzyme catalyses uroporphyrinogen III + 4 H(+) = coproporphyrinogen III + 4 CO2. It participates in porphyrin-containing compound metabolism; protoporphyrin-IX biosynthesis; coproporphyrinogen-III from 5-aminolevulinate: step 4/4. Functionally, catalyzes the decarboxylation of four acetate groups of uroporphyrinogen-III to yield coproporphyrinogen-III. This Streptomyces avermitilis (strain ATCC 31267 / DSM 46492 / JCM 5070 / NBRC 14893 / NCIMB 12804 / NRRL 8165 / MA-4680) protein is Uroporphyrinogen decarboxylase.